The chain runs to 173 residues: Mesencephalic astrocyte-derived neurotrophic factor homolog (173 aa).

The signal sequence occupies residues 1 to 22 (MKTAHLVVVVCFLAGALQTAVA). 4 disulfides stabilise this stretch: C28–C114, C31–C103, C61–C72, and C148–C151.

The protein belongs to the ARMET family.

Its subcellular location is the secreted. Functionally, required during the maturation of the embryonic nervous system for maintenance of neuronal and cuticular connectivity. Essential for maintenance of dopaminergic neurons and dopamine levels. This is Mesencephalic astrocyte-derived neurotrophic factor homolog from Drosophila ananassae (Fruit fly).